We begin with the raw amino-acid sequence, 594 residues long: Protein HOTHEAD (594 aa).

A signal peptide spans 1-19 (MALKLFLFALLLCLPTSLS). An FAD-binding site is contributed by 64–91 (DYIVIGGGTAGCPLAATLSQNFSVLVLE). His529 acts as the Proton acceptor in catalysis.

Belongs to the GMC oxidoreductase family. FAD serves as cofactor. Expressed in roots, leaves, stems, inflorescences and siliques. Found not only in epidermis but also in all sub-epidermal cell layers.

Probable FAD-dependent enzyme. Involved in regulating post-genital organ fusion. Required to limit cellular interactions between contacting epidermal cells during floral development. The chain is Protein HOTHEAD (HTH) from Arabidopsis thaliana (Mouse-ear cress).